The chain runs to 1454 residues: Coiled-coil domain-containing protein 18 (1454 aa).

S45 carries the phosphoserine modification. 4 coiled-coil regions span residues 107–138, 170–402, 438–464, and 508–1309; these read APVD…HSLM, ILEE…ISQL, KLVI…NLTA, and TMNK…SGHE. The interval 828–851 is disordered; it reads QKQRESSAEKLRKMEEKCESAAHE. Residue S1355 is modified to Phosphoserine.

The protein localises to the cytoplasm. It is found in the cytoskeleton. Its subcellular location is the microtubule organizing center. The protein resides in the centrosome. It localises to the centriolar satellite. This chain is Coiled-coil domain-containing protein 18 (CCDC18), found in Homo sapiens (Human).